A 698-amino-acid chain; its full sequence is Elongation factor G (698 aa).

In terms of domain architecture, tr-type G spans 8–290; it reads ERYRNIGISA…AVIELLPSPV (283 aa). Residues 17-24, 88-92, and 142-145 contribute to the GTP site; these read AHIDAGKT, DTPGH, and NKMD.

Belongs to the TRAFAC class translation factor GTPase superfamily. Classic translation factor GTPase family. EF-G/EF-2 subfamily.

It is found in the cytoplasm. Functionally, catalyzes the GTP-dependent ribosomal translocation step during translation elongation. During this step, the ribosome changes from the pre-translocational (PRE) to the post-translocational (POST) state as the newly formed A-site-bound peptidyl-tRNA and P-site-bound deacylated tRNA move to the P and E sites, respectively. Catalyzes the coordinated movement of the two tRNA molecules, the mRNA and conformational changes in the ribosome. The sequence is that of Elongation factor G from Aromatoleum aromaticum (strain DSM 19018 / LMG 30748 / EbN1) (Azoarcus sp. (strain EbN1)).